Here is a 229-residue protein sequence, read N- to C-terminus: Prolactin (229 aa).

Positions 1–30 (MSNRGASLKGLFLAVLLVSNTLLTKEGVTS) are cleaved as a signal peptide. Intrachain disulfides connect cysteine 34–cysteine 41, cysteine 88–cysteine 204, and cysteine 221–cysteine 229.

It belongs to the somatotropin/prolactin family.

It is found in the secreted. The chain is Prolactin (PRL) from Gallus gallus (Chicken).